We begin with the raw amino-acid sequence, 475 residues long: ESX-3 secretion system protein EccD3 (475 aa).

A run of 11 helical transmembrane segments spans residues 132 to 152 (IARG…GLSV), 161 to 181 (LLGQ…ALAV), 186 to 206 (AVLA…AFAL), 212 to 232 (FGAP…LISM), 241 to 261 (IAVF…AGAA), 264 to 284 (WVIS…IVTV), 333 to 353 (GVIA…VSSA), 354 to 374 (NASP…ALRA), 384 to 404 (AWLL…FVIG), 409 to 429 (AALW…VAAL), and 453 to 473 (GLDA…SLVL).

The protein belongs to the EccD/Snm4 family. As to quaternary structure, part of the ESX-3 / type VII secretion system (T7SS), which is composed of cytosolic and membrane components. The ESX-3 membrane complex is composed of EccB3, EccC3, EccD3 and EccE3.

The protein resides in the cell inner membrane. Part of the ESX-3 specialized secretion system, which is required for siderophore-mediated iron acquisition and for the secretion of EsxH and EsxG. The chain is ESX-3 secretion system protein EccD3 from Mycolicibacterium smegmatis (strain ATCC 700084 / mc(2)155) (Mycobacterium smegmatis).